Here is a 460-residue protein sequence, read N- to C-terminus: Heme sensor protein HssS (460 aa).

2 helical membrane-spanning segments follow: residues 11–31 (IYTI…TNII) and 164–184 (IFLA…VISS). One can recognise an HAMP domain in the interval 186–238 (YAIIKPIQQLKRATERLMHGNFDEVIHVTRKDEFGTLQYRFDKMRLSLKQLDD). Positions 246 to 456 (NVSHEIKTPL…TFTITFKKVP (211 aa)) constitute a Histidine kinase domain. His249 is subject to Phosphohistidine; by autocatalysis.

Post-translationally, autophosphorylated.

The protein resides in the cell membrane. The catalysed reaction is ATP + protein L-histidine = ADP + protein N-phospho-L-histidine.. In terms of biological role, member of the two-component regulatory system HssS/HssR involved in intracellular heme homeostasis and tempering of staphylococcal virulence. HssS functions as a heme sensor histidine kinase which is autophosphorylated at a histidine residue and transfers its phosphate group to an aspartate residue of HssR. HssR/HssS activates the expression of hrtAB, an efflux pump, in response to extracellular heme, hemin, hemoglobin or blood. This is Heme sensor protein HssS (hssS) from Staphylococcus saprophyticus subsp. saprophyticus (strain ATCC 15305 / DSM 20229 / NCIMB 8711 / NCTC 7292 / S-41).